A 773-amino-acid polypeptide reads, in one-letter code: C-Maf-inducing protein (773 aa).

The interval 1–30 (MDVTSSSGGGGDPRQIEETKPLLGGDVSAP) is disordered. Positions 54–163 (LLQEGDIQVC…HSLQWKKKIY (110 aa)) constitute a PH domain. Phosphoserine occurs at positions 349, 377, 382, and 660. LRR repeat units follow at residues 663–686 (NLEN…IKLP), 687–707 (SLKQ…RLLS), 712–732 (MLQV…LALS), and 736–756 (SLCS…EDLK).

In terms of assembly, interacts with FLNA. As to expression, isoform 1 is expressed in peripheral blood mononuclear cells and kidney. Lower expression in brain and liver. Expression is down-regulated in activated cells. Isoform 2 is expressed in lymphocyte precursors, however, expression shuts down during maturation and differentiation in thymus and fetal liver.

The protein resides in the nucleus. It localises to the cytoplasm. Plays a role in T-cell signaling pathway. Isoform 2 may play a role in T-helper 2 (Th2) signaling pathway and seems to represent the first proximal signaling protein that links T-cell receptor-mediated signal to the activation of c-Maf Th2 specific factor. The chain is C-Maf-inducing protein (CMIP) from Homo sapiens (Human).